Reading from the N-terminus, the 557-residue chain is D-arabinono-1,4-lactone oxidase (557 aa).

The FAD-binding PCMH-type domain maps to 26-209; that stretch reads FFCKPQAIFQ…THVTLRTIPK (184 aa). Histidine 63 is subject to Pros-8alpha-FAD histidine.

Belongs to the oxygen-dependent FAD-linked oxidoreductase family. Requires FAD as cofactor.

It localises to the mitochondrion membrane. It carries out the reaction D-arabinono-1,4-lactone + O2 = dehydro-D-arabinono-1,4-lactone + H2O2 + H(+). Its pathway is cofactor biosynthesis; D-erythroascorbate biosynthesis; dehydro-D-arabinono-1,4-lactone from D-arabinose: step 2/2. This chain is D-arabinono-1,4-lactone oxidase (ALO1), found in Debaryomyces hansenii (strain ATCC 36239 / CBS 767 / BCRC 21394 / JCM 1990 / NBRC 0083 / IGC 2968) (Yeast).